Reading from the N-terminus, the 111-residue chain is Regulator of ribonuclease activity B (111 aa).

Belongs to the RraB family. In terms of assembly, interacts with the C-terminal region of Rne.

Its subcellular location is the cytoplasm. Its function is as follows. Globally modulates RNA abundance by binding to RNase E (Rne) and regulating its endonucleolytic activity. Can modulate Rne action in a substrate-dependent manner by altering the composition of the degradosome. The protein is Regulator of ribonuclease activity B of Pseudoalteromonas translucida (strain TAC 125).